The following is a 349-amino-acid chain: tRNA N6-adenosine threonylcarbamoyltransferase (349 aa).

Positions 117, 121, and 138 each coordinate Fe cation. Substrate contacts are provided by residues 138–142 (YVAGG), aspartate 170, aspartate 191, and asparagine 271. Aspartate 299 is a Fe cation binding site.

The protein belongs to the KAE1 / TsaD family. It depends on Fe(2+) as a cofactor.

It localises to the cytoplasm. The catalysed reaction is L-threonylcarbamoyladenylate + adenosine(37) in tRNA = N(6)-L-threonylcarbamoyladenosine(37) in tRNA + AMP + H(+). Its function is as follows. Required for the formation of a threonylcarbamoyl group on adenosine at position 37 (t(6)A37) in tRNAs that read codons beginning with adenine. Is probably involved in the transfer of the threonylcarbamoyl moiety of threonylcarbamoyl-AMP (TC-AMP) to the N6 group of A37. In Aeropyrum pernix (strain ATCC 700893 / DSM 11879 / JCM 9820 / NBRC 100138 / K1), this protein is tRNA N6-adenosine threonylcarbamoyltransferase.